We begin with the raw amino-acid sequence, 836 residues long: DNA gyrase subunit A (836 aa).

One can recognise a Topo IIA-type catalytic domain in the interval 34-500 (LPDARDGLKP…AGDVRDIEDI (467 aa)). The O-(5'-phospho-DNA)-tyrosine intermediate role is filled by Y122. The short motif at 527–533 (QKRGGQG) is the GyrA-box element.

It belongs to the type II topoisomerase GyrA/ParC subunit family. As to quaternary structure, heterotetramer, composed of two GyrA and two GyrB chains. In the heterotetramer, GyrA contains the active site tyrosine that forms a transient covalent intermediate with DNA, while GyrB binds cofactors and catalyzes ATP hydrolysis.

The protein localises to the cytoplasm. The enzyme catalyses ATP-dependent breakage, passage and rejoining of double-stranded DNA.. A type II topoisomerase that negatively supercoils closed circular double-stranded (ds) DNA in an ATP-dependent manner to modulate DNA topology and maintain chromosomes in an underwound state. Negative supercoiling favors strand separation, and DNA replication, transcription, recombination and repair, all of which involve strand separation. Also able to catalyze the interconversion of other topological isomers of dsDNA rings, including catenanes and knotted rings. Type II topoisomerases break and join 2 DNA strands simultaneously in an ATP-dependent manner. This Chlamydia trachomatis serovar D (strain ATCC VR-885 / DSM 19411 / UW-3/Cx) protein is DNA gyrase subunit A.